We begin with the raw amino-acid sequence, 366 residues long: MAGPRVEVDGGIMEGGGQILRVSTALSCLLGLPLRVQKIRAGRSTPGLRPQHLSGLEMIRDLCDGQLEGAEIGSTEITFTPEKIKGGVHTADTKTAGSVCLLMQVSMPCVLFAACPSELRLKGGTNAEMAPQIDYTAMVFKPIVEKFGFTFNCDIKMRGYYPKGGGEVIVRMSPVKQLSPINLTDRGCVTKIYGRAFVAGVLPFKVAKDMAAAAVRCIRKEIRDLYVNIQPVQEPKDQAFGNGNGIIIIAETSTGCLFAGSSLGKRGVNADKVGIEAAEMLLANLRHGGAVDEYLQDQLIIFMALASGISRIKTGPVTLHTQTAIHFAEQLAKAKFTVKKSEDEEDASKDTYIIECQGIGMTNPNL.

Residues Q104, P131, Y294, D297, Q298, and H320 each coordinate ATP. H320 acts as the Tele-AMP-histidine intermediate in catalysis.

This sequence belongs to the RNA 3'-terminal cyclase family. Type 1 subfamily.

It localises to the nucleus. Its subcellular location is the nucleoplasm. The catalysed reaction is a 3'-end 3'-phospho-ribonucleotide-RNA + ATP = a 3'-end 2',3'-cyclophospho-ribonucleotide-RNA + AMP + diphosphate. Its function is as follows. Catalyzes the conversion of 3'-phosphate to a 2',3'-cyclic phosphodiester at the end of RNA. The mechanism of action of the enzyme occurs in 3 steps: (A) adenylation of the enzyme by ATP; (B) transfer of adenylate to an RNA-N3'P to produce RNA-N3'PP5'A; (C) and attack of the adjacent 2'-hydroxyl on the 3'-phosphorus in the diester linkage to produce the cyclic end product. Likely functions in some aspects of cellular RNA processing. Function plays an important role in regulating axon regeneration by inhibiting central nervous system (CNS) axon regeneration following optic nerve injury. This chain is RNA 3'-terminal phosphate cyclase (RTCA), found in Bos taurus (Bovine).